The sequence spans 108 residues: Small cysteine and glycine repeat-containing protein 8 (108 aa).

Residues 4-84 (CGCGGCGGGC…RRTCSSCGCG (81 aa)) form a 12 X 2 AA repeats of CG region.

Belongs to the KRTAP type 28 family.

In terms of biological role, in the hair cortex, hair keratin intermediate filaments are embedded in an interfilamentous matrix, consisting of hair keratin-associated proteins (KRTAP), which are essential for the formation of a rigid and resistant hair shaft through their extensive disulfide bond cross-linking with abundant cysteine residues of hair keratins. The matrix proteins include the high-sulfur and high-glycine-tyrosine keratins. The chain is Small cysteine and glycine repeat-containing protein 8 from Homo sapiens (Human).